The chain runs to 278 residues: 4-deoxy-L-threo-5-hexosulose-uronate ketol-isomerase (278 aa).

4 residues coordinate Zn(2+): His196, His198, Glu203, and His245.

This sequence belongs to the KduI family. The cofactor is Zn(2+).

It carries out the reaction 5-dehydro-4-deoxy-D-glucuronate = 3-deoxy-D-glycero-2,5-hexodiulosonate. It participates in glycan metabolism; pectin degradation; 2-dehydro-3-deoxy-D-gluconate from pectin: step 4/5. Functionally, catalyzes the isomerization of 5-dehydro-4-deoxy-D-glucuronate to 3-deoxy-D-glycero-2,5-hexodiulosonate. In Edwardsiella ictaluri (strain 93-146), this protein is 4-deoxy-L-threo-5-hexosulose-uronate ketol-isomerase.